The sequence spans 102 residues: Small ribosomal subunit protein uS10 (102 aa).

It belongs to the universal ribosomal protein uS10 family. As to quaternary structure, part of the 30S ribosomal subunit.

Its function is as follows. Involved in the binding of tRNA to the ribosomes. This chain is Small ribosomal subunit protein uS10, found in Clostridium novyi (strain NT).